The sequence spans 199 residues: Superoxide dismutase [Fe] (199 aa).

Fe cation contacts are provided by histidine 27, histidine 74, aspartate 158, and histidine 162.

Belongs to the iron/manganese superoxide dismutase family. As to quaternary structure, homodimer. Requires Fe cation as cofactor.

The enzyme catalyses 2 superoxide + 2 H(+) = H2O2 + O2. Functionally, destroys superoxide anion radicals which are normally produced within the cells and which are toxic to biological systems. This is Superoxide dismutase [Fe] (SODB) from Babesia bovis.